The sequence spans 2094 residues: MTLHATRAATLLSWVNSLHVADPVETVLQLQDCSIFIKIINTIHDTKEGQQILQQPLPERLDFVCSFLQKNRKHPSSTQCLVSVQKVIEGSEMELAKMIMLFLYQSTMSSRNLRDWEQFEYGVQAELAVILKFMLDHEESLNLTEDLESFLEKVPYTHASTLSEELSPPSHQTKRKIRFLEIQRIASSSSENNFLSGSPSSPMGDILQTPQFQMRRLKKQLADERSNRDDLELELSESLKLLTEKDAQIAMMQQRIDHLALLNEKQAASSQEPSELEELRGKNESLTVRLHETLKQCQNLKTEKSQMDRKISQLSEENGDLSFKVREFANHLQQLQGAFNDLIEEHSKASQEWAEKQARLENELSTALQDKKCLEEKNEILQGKLSQLEDQATRLQESPAPEKGEVLGDALQLDTLKQEAAKLATDNTQLQTRVETLECERGKQEAQLLAERSRFEDEKQQLASLIADLQSSVSNLSQAKEELEQASQAQGAQLTAQLTSMTGLNATLQQRDQELASLKEQAKKEQAQMLQTMQEQEQAAQGLRQQVEQLSSSLKLKEQQLEEAAKEQEATRQDHAQQLAIVAEAREASLRERDTARQQLETVEKEKDAKLESLQQQLQAANDARDNAQTSVTQAQQEKAELSQKIGELHACIEASHQEQRQVQARVTELEAQLKAEQQKTTEREKVVQEKAQLQEQLRALEESLKITKGSLEEEKRRAADALKEQQCRATEMEAESRSLMEQREREQKELEQEKAGRKGLEARIQQLEEAHQAETEALRHELAEATASQHRAESECERLIREVESRQKRFEARQQEEARYGAMFQEQLMALKGEKTGQEVQEEAVEIHSEGQPGQQQSQLAQLHASLAKAIQQVQEKEVRAQKLVDDLSALQEKMAATNKEVACLKTLVLKAGEQQETASLELLKEPPRAANRASDQLGEQQGRPFSSTHAAVKAMEREAEQMGGELERLRAALIKSQGQQQEERGQQEREVARLTQERGQAQADLAQEKAAKAELEMRLQNTLNEQRVEFAALQEALAHALTEKEGTDQELAKLRGQEAAQRTELKELQQTLEQLKIQLVKKEKEHPAGGASGEDASGPGTQSETAGKTDAPGPELQALRAEISKLEQQCQQQQQQVEGLTHSLKSERACRAEQDKALETLQGQLEEKARELGHNQAASASAQRELQALRAKAQDHSKAEEEWKAQVARGQQEAERKSSLISSLEEEVSILNRQVLEKEGESKELKRLVVAESEKSQKLEERLRLLQVETASNSARAAERSSALREEVQSLREEVEKQRVVSENSRQELASQAERAEELGQELKAWQEKFFQKEQALSALQLEHTSTQALVSELLPAKHLCQQLQAEQAAAEKRFREELEQSKQAAGGLQAELMRAQRELGELGSLRQKIVEQERAAQQLRAEKASYAEQLSMLKKAHGLLAEENRGLGERANLGRQFLEVELDQAREKYVQELAAVRTDAETHLAEMRQEAQSTSRELEVMTAKYEGAKVKVLEERQRFQEERQKLTAQVEELSKKLTEHDQASKVQQQKLKAFQAQRGESQQEVQRLQTQLNELQAQLSQKEQAAEHYKLQMEKAKTHYDAKKQQNQKLQEQLQDLEELQKENKELRSEAERLGRELQQAGLKTKEAEQTCRHLTAQVRSLEAQVAHADQQLRDLGKFQVATDALKSREPQVKPQLDLSIDSLDLSLEEGTPCSVASKLPRTQPDGTSVPGEPASPISQRLPPKVESLESLYFTPTPARGQAPLETSLDSLGDAFPDSGRKTRSARRRTTQIINITMTKKLELEEPDSANSSFYSTQSAPASQANLRATSSTQSLARLGSPDDGNSALLSLPGYRPTTRSSARRSQARMSSGAPQGRNSFYMGTCQDEPEQLDDWNRIAELQQRNRVCPPHLKTCYPLESRPTLSLATITDEEMKTGDPRETLRRASMQPAQIAEGVGITTRQQRKRVSSETHQGPGTPESKKATSCFPRPMTPRDRHEGRKQSSTADTQKKAAPVLKQADRRQSMAFSILNTPKKLGNSLLRRGASKKTPAKVSPNPRSGTRRSPRIATTTTGTATVATTPRAKGKVKH.

Positions 1-210 (MTLHATRAAT…SPMGDILQTP (210 aa)) are head (Globular). Residue S160 is modified to Phosphoserine. T161 is modified (phosphothreonine). Phosphoserine occurs at positions 167 and 201. T209 carries the phosphothreonine modification. Positions 211 to 1681 (QFQMRRLKKQ…ADQQLRDLGK (1471 aa)) form a coiled coil. S269 is modified (phosphoserine). K377 carries the N6-acetyllysine modification. 2 positions are modified to phosphoserine: S386 and S398. At K443 the chain carries N6-acetyllysine. Disordered regions lie at residues 617 to 636 (QLQA…TQAQ) and 723 to 759 (LKEQ…AGRK). The segment covering 627–636 (NAQTSVTQAQ) has biased composition (polar residues). Residue K878 is modified to N6-acetyllysine. 3 disordered regions span residues 921–1000 (SLEL…TQER), 1081–1143 (LVKK…EGLT), and 1173–1223 (ELGH…SSLI). The segment covering 935–951 (ASDQLGEQQGRPFSSTH) has biased composition (polar residues). Basic and acidic residues-rich tracts occupy residues 956-972 (AMER…ERLR) and 983-998 (QEER…RLTQ). S1183 carries the post-translational modification Phosphoserine. Residues 1194 to 1206 (KAQDHSKAEEEWK) show a composition bias toward basic and acidic residues. S1221 carries the phosphoserine modification. Position 1507 is an N6-acetyllysine (K1507). Position 1583 is a phosphoserine (S1583). K1681 is covalently cross-linked (Glycyl lysine isopeptide (Lys-Gly) (interchain with G-Cter in SUMO2)). A membrane-binding domain 1 region spans residues 1681-1858 (KFQVATDALK…NSALLSLPGY (178 aa)). The tract at residues 1682 to 2094 (FQVATDALKS…TPRAKGKVKH (413 aa)) is tail (Globular). Residues S1703, S1706, and S1710 each carry the phosphoserine modification. A disordered region spans residues 1718–1743 (SVASKLPRTQPDGTSVPGEPASPISQ). The short motif at 1724-1730 (PRTQPDG) is the Tankyrase-binding domain element. 2 positions are modified to phosphoserine: S1739 and S1742. A Glycyl lysine isopeptide (Lys-Gly) (interchain with G-Cter in SUMO1); alternate cross-link involves residue K1748. K1748 is covalently cross-linked (Glycyl lysine isopeptide (Lys-Gly) (interchain with G-Cter in SUMO2); alternate). S1751 is subject to Phosphoserine. S1754 is modified (phosphoserine; by PLK1). Y1756 is subject to Phosphotyrosine. T1758 is modified (phosphothreonine). The interval 1760–1795 (TPARGQAPLETSLDSLGDAFPDSGRKTRSARRRTTQ) is disordered. The 4.1-binding domain stretch occupies residues 1770 to 1792 (TSLDSLGDAFPDSGRKTRSARRR). S1771 carries the post-translational modification Phosphoserine; by PLK1. Phosphoserine occurs at positions 1774 and 1782. Position 1786 is a phosphothreonine (T1786). K1804 is covalently cross-linked (Glycyl lysine isopeptide (Lys-Gly) (interchain with G-Cter in SUMO2)). Disordered stretches follow at residues 1807–1883 (LEEP…GRNS) and 1937–2094 (EMKT…KVKH). Phosphoserine occurs at positions 1812 and 1815. Residues 1812–1839 (SANSSFYSTQSAPASQANLRATSSTQSL) show a composition bias toward polar residues. S1816 is subject to Phosphoserine; by PLK1. A Phosphotyrosine modification is found at Y1818. S1822 is subject to Phosphoserine. S1826 is subject to Phosphoserine; alternate. An O-linked (GlcNAc) serine; alternate glycan is attached at S1826. A phosphoserine mark is found at S1844 and S1869. Positions 1864–1967 (SSARRSQARM…AEGVGITTRQ (104 aa)) are tubulin-binding domain. The interval 1874 to 1908 (SSGAPQGRNSFYMGTCQDEPEQLDDWNRIAELQQR) is GPSM2-binding domain. The segment covering 1937-1948 (EMKTGDPRETLR) has biased composition (basic and acidic residues). The residue at position 1951 (S1951) is a Phosphoserine. The interval 1963–2042 (ITTRQQRKRV…SILNTPKKLG (80 aa)) is membrane-binding domain 2. A Nuclear localization signal motif is present at residues 1966–1971 (RQQRKR). Phosphoserine is present on residues S1973 and S1974. A Phosphothreonine modification is found at T1982. At S1985 the chain carries Phosphoserine. At T1997 the chain carries Phosphothreonine; by CDK1. A compositionally biased stretch (basic and acidic residues) spans 1997–2006 (TPRDRHEGRK). The residue at position 2029 (S2029) is a Phosphoserine. The residue at position 2037 (T2037) is a Phosphothreonine. Phosphoserine is present on residues S2044 and S2059. S2069 carries the phosphoserine; by CDK1 modification. Residues 2073-2085 (ATTTTGTATVATT) show a composition bias toward low complexity. T2085 bears the Phosphothreonine; by CDK1 mark.

In terms of assembly, homodimer. Also forms multiarm oligomers by association of C-terminal tail domains, oligomers may further assemble to form a hexagonal nuclear lattice-like network. Associates with the dynein-dynactin complex; this association promotes the transport and accumulation of NUMA1 at the mitotic spindle poles that is inhibited by the BRISC complex in a PLK1-dependent manner. Part of a spindle orientation complex at least composed of GNAI1, GPSM2 and NUMA1. Interacts (via C-terminus) with microtubules (MTs); this interaction is direct and promotes both MT bundle formation and stability in a dynein-dynactin complex- and CDK1-independent manner. Interacts with EPB41 and EPB41L2; these interactions are negatively regulated by CDK1 during metaphase and are important for anaphase-specific localization of NUMA1 in symmetrically dividing cells. Interacts (via C-terminus) with GPSM2 (via TPR repeats); this interaction is direct, prevented by competitive binding of INSC, is inhibited in a PLK1-dependent manner, blocks the association of NUMA1 with MTs and inhibits NUMA1-induced MT bundle formation, prevents the association of NUMA1 with SPAG5, induces mitotic spindle pole localization of GPSM2, both metaphase cell cortex localization of NUMA1 and mitotic spindle organization. Does not interact with GPSM2 during anaphase. Interacts (via C-terminus) with the nuclear importin alpha/importin beta receptor; this interaction is inhibited by RanGTP. Interacts (via C-terminus) with KPNB1; this interaction is inhibited by RanGTP and the BRISC complex. Interacts with ABRAXAS2 and the BRISC complex; these interactions regulate mitotic spindle assembly. Interacts (via N-terminal end of the coiled-coil domain) with RAE1; this interaction promotes mitotic spindle formation. Interacts (via C-terminus) with SPAG5 (via C-terminus); this interaction promotes the recruitment of SPAG5 to the MTs at spindle poles in a dynein-dynactin-dependent manner and regulates mitotic spindle organization and proper chromosome alignment during mitosis. Interacts with TNKS; this interaction occurs at the onset of mitosis. Interacts with TNKS2. Interacts with tubulin. Interacts with KHDC3 (via C-terminus). Post-translationally, phosphorylation and dephosphorylation on Thr-2037 regulates the extent of cortical NUMA1 and the dynein-dynactin complex localization during mitotic metaphase and anaphase. In metaphase, phosphorylation on Thr-2037 occurs in a kinase CDK1-dependent manner; this phosphorylation maintains low levels of cortical dynein-dynactin complex at metaphase, and hence proper spindle positioning. In anaphase, dephosphorylated on Thr-2037 by phosphatase PPP2CA; this dephosphorylation stimulates its membrane association and with the dynein-dynactin complex its enrichment at the cell cortex, and hence robust spindle elongation. Probably also phosphorylated on Thr-1997 and Ser-2069 by CDK1; these phosphorylations may regulate its cell cortex recruitment during metaphase and anaphase. Phosphorylated on Ser-1751, Ser-1754, Ser-1771 and Ser-1816 by PLK1; these phosphorylations induce cortical dynein-dynactin complex dissociation from the NUMA1-GPSM2 complex and negatively regulates cortical dynein-dynactin complex localization. ADP-ribosylated by TNKS at the onset of mitosis; ADP-ribosylation is not required for its localization to spindle poles. In terms of processing, O-glycosylated during cytokinesis at sites identical or close to phosphorylation sites, this interferes with the phosphorylation status. Post-translationally, ubiquitinated with 'Lys-63'-linked polyubiquitin chains. Deubiquitination by the BRISC complex is important for the incorporation of NUMA1 into mitotic spindle poles and normal spindle pole function, probably by modulating interactions between NUMA1, dynein-dynactin complex and importin-beta. Expressed in testis, speen, liver, lung, spinal cord and brain. Expressed in Purkinje neurons (at protein level).

The protein resides in the nucleus. It is found in the nucleoplasm. The protein localises to the nucleus matrix. Its subcellular location is the chromosome. It localises to the cytoplasm. The protein resides in the cytoskeleton. It is found in the microtubule organizing center. The protein localises to the centrosome. Its subcellular location is the spindle pole. It localises to the cell cortex. The protein resides in the cell membrane. It is found in the lateral cell membrane. Functionally, microtubule (MT)-binding protein that plays a role in the formation and maintenance of the spindle poles and the alignement and the segregation of chromosomes during mitotic cell division. Functions to tether the minus ends of MTs at the spindle poles, which is critical for the establishment and maintenance of the spindle poles. Plays a role in the establishment of the mitotic spindle orientation during metaphase and elongation during anaphase in a dynein-dynactin-dependent manner. In metaphase, part of a ternary complex composed of GPSM2 and G(i) alpha proteins, that regulates the recruitment and anchorage of the dynein-dynactin complex in the mitotic cell cortex regions situated above the two spindle poles, and hence regulates the correct oritentation of the mitotic spindle. During anaphase, mediates the recruitment and accumulation of the dynein-dynactin complex at the cell membrane of the polar cortical region through direct association with phosphatidylinositol 4,5-bisphosphate (PI(4,5)P2), and hence participates in the regulation of the spindle elongation and chromosome segregation. Also binds to other polyanionic phosphoinositides, such as phosphatidylinositol 3-phosphate (PIP), lysophosphatidic acid (LPA) and phosphatidylinositol triphosphate (PIP3), in vitro. Also required for proper orientation of the mitotic spindle during asymmetric cell divisions. Plays a role in mitotic MT aster assembly. Involved in anastral spindle assembly. Positively regulates TNKS protein localization to spindle poles in mitosis. Highly abundant component of the nuclear matrix where it may serve a non-mitotic structural role, occupies the majority of the nuclear volume. Required for epidermal differentiation and hair follicle morphogenesis. The chain is Nuclear mitotic apparatus protein 1 from Mus musculus (Mouse).